The following is a 93-amino-acid chain: uncharacterized protein (93 aa).

To E.coli YdbD C-terminal region.

This is an uncharacterized protein from Escherichia coli (strain K12).